A 197-amino-acid chain; its full sequence is Putative sulfur carrier protein aq_1421 (197 aa).

C17 acts as the Cysteine persulfide intermediate in catalysis.

The protein belongs to the sulfur carrier protein TusA family.

This Aquifex aeolicus (strain VF5) protein is Putative sulfur carrier protein aq_1421.